The following is a 527-amino-acid chain: UDP-glucuronosyltransferase 2A3 (527 aa).

The N-terminal stretch at 1–23 (MRSEKSALVFLLLQLFCVGCGFC) is a signal peptide. Residues 24–486 (GKVLVWPCDM…AAHNLTWFQH (463 aa)) lie on the Extracellular side of the membrane. N-linked (GlcNAc...) asparagine glycosylation occurs at Asn-313. A helical transmembrane segment spans residues 487–507 (YSIDVIGFLLACVATAIFLFT). Over 508 to 523 (KCCLFSCQKFNKTRKI) the chain is Cytoplasmic.

The protein belongs to the UDP-glycosyltransferase family.

The protein resides in the membrane. It catalyses the reaction glucuronate acceptor + UDP-alpha-D-glucuronate = acceptor beta-D-glucuronoside + UDP + H(+). Its function is as follows. UDP-glucuronosyltransferases catalyze phase II biotransformation reactions in which lipophilic substrates are conjugated with glucuronic acid to increase water solubility and enhance excretion. They are of major importance in the conjugation and subsequent elimination of potentially toxic xenobiotics and endogenous compounds. This is UDP-glucuronosyltransferase 2A3 (UGT2A3) from Pongo abelii (Sumatran orangutan).